The primary structure comprises 172 residues: Pollen-specific protein-like At4g18596 (172 aa).

The N-terminal stretch at 1–27 (MASKAIFFFFVSAVCLSSLAGVAIADA) is a signal peptide. 3 disulfides stabilise this stretch: C41–C112, C44–C157, and C65–C100. Residue N70 is glycosylated (N-linked (GlcNAc...) asparagine).

The protein belongs to the Ole e I family.

The protein resides in the secreted. In Arabidopsis thaliana (Mouse-ear cress), this protein is Pollen-specific protein-like At4g18596.